We begin with the raw amino-acid sequence, 243 residues long: Aldehyde decarbonylase (243 aa).

The Fe cation site is built by E45, E73, H76, E128, and H160.

Belongs to the aldehyde decarbonylase family. The cofactor is Binds 2 metal cations per subunit. The catalytic dinuclear metal-binding site could be either a di-iron or a manganese-iron cofactor..

It catalyses the reaction a long-chain fatty aldehyde + 2 NADPH + O2 + H(+) = a long-chain alkane + formate + 2 NADP(+) + H2O. Functionally, catalyzes the decarbonylation of fatty aldehydes to alkanes. Requires the presence of ferredoxin, ferredoxin reductase and NADPH for in vitro decarbonylase activity. Involved in the biosynthesis of alkanes, mainly heptadecane and pentadecane. The polypeptide is Aldehyde decarbonylase (Prochlorococcus marinus (strain MIT 9313)).